The following is a 932-amino-acid chain: Isoleucine--tRNA ligase (932 aa).

Positions 59–69 (PYANGTIHIGH) match the 'HIGH' region motif. E562 contributes to the L-isoleucyl-5'-AMP binding site. Positions 603-607 (KMSKS) match the 'KMSKS' region motif. K606 is an ATP binding site. Residues C899, C902, C915, and C918 each coordinate Zn(2+).

It belongs to the class-I aminoacyl-tRNA synthetase family. IleS type 1 subfamily. Monomer. Requires Zn(2+) as cofactor.

The protein resides in the cytoplasm. It carries out the reaction tRNA(Ile) + L-isoleucine + ATP = L-isoleucyl-tRNA(Ile) + AMP + diphosphate. Its function is as follows. Catalyzes the attachment of isoleucine to tRNA(Ile). As IleRS can inadvertently accommodate and process structurally similar amino acids such as valine, to avoid such errors it has two additional distinct tRNA(Ile)-dependent editing activities. One activity is designated as 'pretransfer' editing and involves the hydrolysis of activated Val-AMP. The other activity is designated 'posttransfer' editing and involves deacylation of mischarged Val-tRNA(Ile). The chain is Isoleucine--tRNA ligase from Pasteurella multocida (strain Pm70).